The chain runs to 33 residues: U13-ctenitoxin-Pn1c (33 aa).

Disulfide bonds link cysteine 3–cysteine 17, cysteine 10–cysteine 21, and cysteine 16–cysteine 30.

Expressed by the venom gland.

It localises to the secreted. Acts as a neurotoxin. The protein is U13-ctenitoxin-Pn1c of Phoneutria nigriventer (Brazilian armed spider).